The sequence spans 204 residues: Dihydroorotase (204 aa).

His-34 lines the Zn(2+) pocket. Leu-79 provides a ligand contact to substrate. Asp-107 is a Zn(2+) binding site. The active site involves Asp-107. The substrate site is built by His-111 and Ala-123.

The protein belongs to the metallo-dependent hydrolases superfamily. DHOase family. Class II DHOase subfamily. Homodimer. Zn(2+) serves as cofactor.

The catalysed reaction is (S)-dihydroorotate + H2O = N-carbamoyl-L-aspartate + H(+). It functions in the pathway pyrimidine metabolism; UMP biosynthesis via de novo pathway; (S)-dihydroorotate from bicarbonate: step 3/3. Functionally, catalyzes the reversible cyclization of carbamoyl aspartate to dihydroorotate. The chain is Dihydroorotase from Serratia marcescens.